An 883-amino-acid polypeptide reads, in one-letter code: MAERNSASWNRKVASFCSEPKTFLCDSSVDGFLGELLKDLQSEAIHGQTKILMMDLLLEFPEFLCPDQKTVEMTAETLMNILKKMPSSERSMTLRCHLLLAIETVLITCESFNQNSKMAQDFASLLMHIISDVNDKKQGVANRPLRTTACECLRELESCYPGFLSQRMEKLYLMQQQEVTAAHQSYTLLYTVVLKNAIRFLAQKEGPSNGALKNALLSNEDFFWSATENMVELQPSSNEQLLLLPSNSETKDLKSILALLLEDSYLLTPVCQNTLFWQIVQVVAMARTISPVIFKSQLVRLFSTMDLSCFHSILQMKAVFTDSLFTGEDEHFLIQRLVGMTQHPLLSTPVKLFYLDCLLHFPENRPLTSNSEENLPVLLTVQMTSSLFPNVFNDHSTMLCRQNVLSMVYLENEGSYSEKGIAFLFEHVMSLYSMVHKNGNREITATFFRAVHLFVQYFNFCEKHMENLTEKLLKLYMSNSSLAPNFINLINQTQILLEFHVWPVTLSKALQKEIVNLPTDKWTMKNLGWHLKILSRVAQENSISQSSTALFLRRVVFCSDLCSKGDWRTGNALLSVCKHVLQHQKLSAIFVHLADLLQYLMHRFEDIDVQDRARLYYVLLTNVSSDKLGKILTMSPARGQTKSRSLSSIMTENENFSTMLTIRNAEKTLLCLQPVLEGIKAFTCISDSPSLYCIVLQFENTDCRFESISDINVPCLFVDRKPPVVTINLVPKEPYPTIFSVSATYSTQDGITYQTKLDPLYITFREMFIPLPLPALWPLESRFDLFGKLWSAFKPDEQNQFEESIFCYEMSNNSLHDIVLDNFSKFAVSCNGGEYKIAVFLPPQFHILMHIKSQDDTACFSVRTDNWNLLPYLNSHLLDITLQ.

In terms of assembly, probably part of the adaptor protein complex 5 (AP-5).

Its function is as follows. As part of AP-5, a probable fifth adaptor protein complex, it may be involved in endosomal transport. The sequence is that of AP-5 complex subunit beta-1 (ap5b1) from Xenopus tropicalis (Western clawed frog).